The primary structure comprises 451 residues: Exodeoxyribonuclease 7 large subunit (451 aa).

This sequence belongs to the XseA family. Heterooligomer composed of large and small subunits.

It localises to the cytoplasm. It catalyses the reaction Exonucleolytic cleavage in either 5'- to 3'- or 3'- to 5'-direction to yield nucleoside 5'-phosphates.. Its function is as follows. Bidirectionally degrades single-stranded DNA into large acid-insoluble oligonucleotides, which are then degraded further into small acid-soluble oligonucleotides. In Neisseria gonorrhoeae (strain ATCC 700825 / FA 1090), this protein is Exodeoxyribonuclease 7 large subunit.